Consider the following 159-residue polypeptide: Thymic stromal lymphopoietin (159 aa).

An N-terminal signal peptide occupies residues 1–28 (MFPFALLYVLSVSFRKIFILQLVGLVLT). Intrachain disulfides connect Cys34–Cys110, Cys69–Cys75, and Cys90–Cys137. Residue Asn64 is glycosylated (N-linked (GlcNAc...) asparagine). A glycan (N-linked (GlcNAc...) asparagine) is linked at Asn119.

In terms of assembly, interacts with a receptor composed of CRLF2 and IL7R. Binding of TSLP to CRLF2/TSLPR is a mechanistic prerequisite for recruitment of IL7R to the high-affinity ternary complex. As to expression, isoform 1 is expressed in a number of tissues including heart, liver and prostate. Isoform 2 is the predominant form in keratinocytes of oral mucosa, skin and in salivary glands. It is secreted into saliva.

It is found in the secreted. In terms of biological role, cytokine that induces the release of T-cell-attracting chemokines from monocytes and, in particular, enhances the maturation of CD11c(+) dendritic cells. Can induce allergic inflammation by directly activating mast cells. May act as an antimicrobial peptide in the oral cavity and on the skin. The protein is Thymic stromal lymphopoietin (TSLP) of Homo sapiens (Human).